A 543-amino-acid polypeptide reads, in one-letter code: Phosphoribosylaminoimidazole carboxylase (543 aa).

The region spanning 110–297 (KEHLIKNGIA…QFEAHVRAIT (188 aa)) is the ATP-grasp domain. 137–192 (GAKYGFPYMLKSRTMAYDGRGNFVVKDKSYIPEALKVLDDRPLYAEKWAPFSKELA) serves as a coordination point for ATP.

This sequence in the C-terminal section; belongs to the AIR carboxylase family. Class I subfamily.

The enzyme catalyses 5-amino-1-(5-phospho-D-ribosyl)imidazole-4-carboxylate + H(+) = 5-amino-1-(5-phospho-beta-D-ribosyl)imidazole + CO2. It functions in the pathway purine metabolism; IMP biosynthesis via de novo pathway; 5-amino-1-(5-phospho-D-ribosyl)imidazole-4-carboxylate from 5-amino-1-(5-phospho-D-ribosyl)imidazole (carboxylase route): step 1/1. In Ogataea methanolica (Yeast), this protein is Phosphoribosylaminoimidazole carboxylase (ADE1).